A 158-amino-acid polypeptide reads, in one-letter code: Siroheme decarboxylase beta subunit (158 aa).

Belongs to the Ahb/Nir family. As to quaternary structure, forms a heterodimer composed of AhbA and AhbB.

The enzyme catalyses siroheme + 2 H(+) = 12,18-didecarboxysiroheme + 2 CO2. The protein operates within porphyrin-containing compound metabolism; protoheme biosynthesis. In terms of biological role, involved in siroheme-dependent heme b biosynthesis. Catalyzes the decarboxylation of siroheme into didecarboxysiroheme. In Oleidesulfovibrio alaskensis (strain ATCC BAA-1058 / DSM 17464 / G20) (Desulfovibrio alaskensis), this protein is Siroheme decarboxylase beta subunit.